The chain runs to 548 residues: MSQQAGNAQRGRFDEEPMSLGEKISHRMDQLKEIVSSSCPCAGKFPPVAIVLIVALIILGVIIAVPLVIFLSPSAQAMSSGTRDLSSHSIRHPKVWPKTEKVQDDDLSAIQMTSLLPPNVSTCSGFGFACTGSIDMIIPSSKRCDGLKDCSDGSDEENCKECQSIYSCRAHIEEESEKKDKTSVLPTLICLTAEKLCNGVENCPDGSDEASCRSKCSKDQFKCSGSDACLPISVKCDGVSDCENESDESNCNKCQKGAHKCGKNCIKASKVCDGIPDCDDGSDEHQCDCKTCSGSEKALCEDGTCIMRSQVCDGKHDCLDGIDEENCPGSCSNERFSSKLKLLTCDDGNQYSEVEACSGLVEACELNCPKCDPKHTFTCPAVGGIHNKCIKRSKVCDGIFDCEDGADEKKCTPVKECVVESSIQFTCDNKCLESSRRCDGVWDCEDKSDEKGCDKCPSRSFKCSADKKCLPFHTRCNGVAECSDGSDEHKCSCQECLGTHHDTYMCSESNRCLKRGEVCSPYSMCPNATYIDKAYCASLALKNSGLRP.

At 1-49 the chain is on the cytoplasmic side; it reads MSQQAGNAQRGRFDEEPMSLGEKISHRMDQLKEIVSSSCPCAGKFPPVA. The helical; Signal-anchor for type II membrane protein transmembrane segment at 50 to 70 threads the bilayer; it reads IVLIVALIILGVIIAVPLVIF. At 71 to 548 the chain is on the extracellular side; it reads LSPSAQAMSS…LALKNSGLRP (478 aa). A glycan (N-linked (GlcNAc...) asparagine) is linked at asparagine 119. LDL-receptor class A domains follow at residues 122-160, 161-213, 215-252, 253-288, 291-328, 370-412, 416-454, and 455-492; these read TCSG…ENCK, ECQS…ASCR, KCSK…SNCN, KCQK…HQCD, TCSG…ENCP, KCDP…KKCT, ECVV…KGCD, and KCPS…HKCS. Disulfide bonds link cysteine 130–cysteine 150, cysteine 144–cysteine 159, cysteine 162–cysteine 190, cysteine 168–cysteine 203, cysteine 197–cysteine 212, cysteine 216–cysteine 229, cysteine 223–cysteine 242, cysteine 236–cysteine 251, cysteine 254–cysteine 265, cysteine 261–cysteine 278, cysteine 272–cysteine 287, cysteine 292–cysteine 305, cysteine 300–cysteine 318, cysteine 312–cysteine 327, cysteine 371–cysteine 389, cysteine 379–cysteine 402, cysteine 396–cysteine 411, cysteine 417–cysteine 431, cysteine 427–cysteine 444, cysteine 438–cysteine 453, cysteine 456–cysteine 469, cysteine 463–cysteine 482, and cysteine 476–cysteine 491. The N-linked (GlcNAc...) asparagine glycan is linked to asparagine 244. N-linked (GlcNAc...) asparagine glycosylation is present at asparagine 527.

The protein localises to the cell membrane. It is found in the endosome membrane. In terms of biological role, probable receptor which is required for the oocyte-to-zygote transition although its exact function is controversial. Redundantly with egg-1, seems to be required for fertilization probably by promoting the interaction or fusion between sperm and oocyte. Conversely, shown to be dispensable for fertilization but required together with egg-1 for the formation of a continuous and cohesive eggshell chitin layer by maintaining a homogenous distribution of chitin synthase chs-1 at the unfertilized oocyte cell membrane. Appears to recruit or maintain together to the unfertilized oocyte cortex several proteins including chs-1, kinase mbk-2 and pseudophosphatase egg-3, and possibly egg-4 and egg-5. The polypeptide is LDL receptor repeat-containing protein egg-2 (Caenorhabditis elegans).